A 304-amino-acid polypeptide reads, in one-letter code: UDP-N-acetylenolpyruvoylglucosamine reductase (304 aa).

The region spanning 31–196 (KVGGPADYLA…ISAKFNLKPG (166 aa)) is the FAD-binding PCMH-type domain. Arg-175 is a catalytic residue. The Proton donor role is filled by Ser-225. The active site involves Glu-295.

Belongs to the MurB family. It depends on FAD as a cofactor.

The protein localises to the cytoplasm. The catalysed reaction is UDP-N-acetyl-alpha-D-muramate + NADP(+) = UDP-N-acetyl-3-O-(1-carboxyvinyl)-alpha-D-glucosamine + NADPH + H(+). It participates in cell wall biogenesis; peptidoglycan biosynthesis. Functionally, cell wall formation. In Streptococcus thermophilus (strain ATCC BAA-491 / LMD-9), this protein is UDP-N-acetylenolpyruvoylglucosamine reductase.